The sequence spans 121 residues: Small ribosomal subunit protein uS13 (121 aa).

Positions 94–121 are disordered; that stretch reads GLPVRGQKTRNNAHTVKGKPKAIAGKKK. A compositionally biased stretch (basic residues) spans 109 to 121; that stretch reads VKGKPKAIAGKKK.

Belongs to the universal ribosomal protein uS13 family. As to quaternary structure, part of the 30S ribosomal subunit. Forms a loose heterodimer with protein S19. Forms two bridges to the 50S subunit in the 70S ribosome.

Located at the top of the head of the 30S subunit, it contacts several helices of the 16S rRNA. In the 70S ribosome it contacts the 23S rRNA (bridge B1a) and protein L5 of the 50S subunit (bridge B1b), connecting the 2 subunits; these bridges are implicated in subunit movement. Contacts the tRNAs in the A and P-sites. The polypeptide is Small ribosomal subunit protein uS13 (Onion yellows phytoplasma (strain OY-M)).